The primary structure comprises 277 residues: Putative serine/threonine-protein kinase PRKY (277 aa).

The span at 1–12 (MEAPGPAQAAAA) shows a compositional bias: low complexity. The tract at residues 1 to 40 (MEAPGPAQAAAAESNSREVTEDAADWAPALCPSPEARSPE) is disordered. A Protein kinase domain is found at 49-277 (CDALVTMGTG…DFHVKTGRMM (229 aa)). Residues 55–63 (MGTGTFGRV) and lysine 78 contribute to the ATP site. Residue aspartate 172 is the Proton acceptor of the active site. Threonine 203 carries the phosphothreonine modification.

The protein belongs to the protein kinase superfamily. AGC Ser/Thr protein kinase family. cAMP subfamily. In terms of tissue distribution, ubiquitous.

It carries out the reaction L-seryl-[protein] + ATP = O-phospho-L-seryl-[protein] + ADP + H(+). The enzyme catalyses L-threonyl-[protein] + ATP = O-phospho-L-threonyl-[protein] + ADP + H(+). This Homo sapiens (Human) protein is Putative serine/threonine-protein kinase PRKY (PRKY).